A 318-amino-acid chain; its full sequence is Taste receptor type 2 member 7 (318 aa).

Over 1-9 the chain is Extracellular; sequence MTDKVQTTL. The chain crosses the membrane as a helical span at residues 10–30; it reads LFLAVGEFSVGILGNAFIGLV. Topologically, residues 31–55 are cytoplasmic; that stretch reads NCMDWIKKRKIASIDLILTSLAISR. The chain crosses the membrane as a helical span at residues 56–76; that stretch reads ICLLCVILLDCFILVLYPDVY. The Extracellular segment spans residues 77–94; that stretch reads ATGKEMRIIDFFWILTNH. A helical transmembrane segment spans residues 95 to 115; it reads LSIWFATCLSIYYFFKIANFF. Residues 116–128 are Cytoplasmic-facing; it reads HPLFLWMKWRIDR. A helical transmembrane segment spans residues 129 to 149; that stretch reads VISWILLGCMVLSVFISLPAT. Residues 150–187 are Extracellular-facing; sequence ENLNADFRFCVKAKRKTNLTWSCRVNKTQHASIKLLLN. 2 N-linked (GlcNAc...) asparagine glycosylation sites follow: N167 and N175. Residues 188–208 form a helical membrane-spanning segment; the sequence is LATLLPFCVCLMSFFLLILSL. The Cytoplasmic portion of the chain corresponds to 209-235; that stretch reads RRHIRRMQLSATGCRDPSTEAHVRALK. A helical transmembrane segment spans residues 236–256; the sequence is AVISFLLLFIAYYLSFLIATS. The Extracellular portion of the chain corresponds to 257 to 266; the sequence is SYFMPETELA. Residues 267 to 287 form a helical membrane-spanning segment; sequence VIFGESIALIYPSSHSFILIL. Topologically, residues 288–318 are cytoplasmic; that stretch reads GNNKLRHASLKVIWKVMSILKGRKFQQHKQI.

Belongs to the G-protein coupled receptor T2R family.

The protein resides in the membrane. In terms of biological role, gustducin-coupled receptor implicated in the perception of bitter compounds in the oral cavity and the gastrointestinal tract. Signals through PLCB2 and the calcium-regulated cation channel TRPM5. This Pongo pygmaeus (Bornean orangutan) protein is Taste receptor type 2 member 7 (TAS2R7).